Here is a 100-residue protein sequence, read N- to C-terminus: Small ribosomal subunit protein uS14c (100 aa).

This sequence belongs to the universal ribosomal protein uS14 family. In terms of assembly, part of the 30S ribosomal subunit.

It is found in the plastid. In terms of biological role, binds 16S rRNA, required for the assembly of 30S particles. The polypeptide is Small ribosomal subunit protein uS14c (Cuscuta obtusiflora (Peruvian dodder)).